Here is a 1414-residue protein sequence, read N- to C-terminus: MSRNNPPPVIITTDPDSPALHSAPSTPPPNQRPTPTLVIPGSPASESSHPESPQGNDPFRLSPNARLYPPGSGHSPTPSYSSALTPPSPTLTSSSSVHFSDELPTPSSPNPKTSLALRDNHPDARSGMETLQTVDENDPQRRHARGWSIGTWSSAAPTADGYSMKKPLIRTATGASEVDGDRGEDDANKKGKKDKKGKKGKKDKEEPPSAHLDPDKDKTDPTPFREKPSRLAMLVDPKSLEDLEKIGGVSGLLEGLGVDGEKGLAVGTDEGNAENGAPRSSADMPGGNGPQWRASMDRRRDIYGRNDLPRRKSKSLLLLMWLAFKDKVLILLSVAAVVSLALGLYQDLGTPPKIIYNDECPDGCEEAQVDWVEGVAIVVAIIIVVLVGSINDWQKERQFKKLNEKREDRNVKVIRGGSEMVINVKDVVVGDVCLLEPGEIIPVDGIFLRGHNVRCDESGATGESDAIKKFSYDECIKERDNLQPGQRQKKDCFLISGAKVLEGVGEYVVIAVGPTSFNGRIMMAMRGDADETPLQIKLNHLAELIAKLGGASGLLLFIALMIRFFVQLKTNPDRSANDKAQSFIQILIIAVTLVVVAVPEGLPLAVTLALAFATKRMTKQNLLVRVLGSCETMANATVVCTDKTGTLTQNEMTVVAGSLGVHGKFVKDLSDNASRSNANEGEGHSVHGDFSFDMSQLNDYASSSLQTLFNEAICINSTAFEDKNEEGKLNFVGSKTETALLRFAKDMEWPNYRQVRESAEIVQMIPFSSELKAMGVVVRKDDTYRLYLKGASEVLSNNCTRHVVVHQDGNKGDDIETTEFDDDTMSNISKTIIFYANQSLRTIALCYRDFESWPPAGTEKDGADEVPYEAIAKDMTLIAITGIEDPLRPGVREAVEKCQLAGVAVKMCTGDNVLTARSIASQCGIFTAGGVVMEGPLFRKLSDSDRLEIAPRLQILARSSPEDKRLLVKTLKSMGEVVGVTGDGTNDGPALKLANVGFAMGIAGTEVAKEASDIILMDDSFKNIVLAIMWGRCVNDSVKKFLQFQISVNITAVFITFISAVASSSEESVLTAVQLLWVNLIMDTFAALALATDPATESSLDRKPDRKNAPLITVEMFKMIMVQAIYQIIVCLVLHFAGLKILGLEDNDQNNTELGALVFNCFVFCQIFNQLNCRRLDRKLNVLEGFWRNWYFIIIFLIMVGGQILIVEVGGAAFQVTRLGGRDWGITLVIGALSLPIGALVRLTPTGPFARLLVKLHIYADPNKLPELSPEAEEEQYSYNPALSRVKDNLSTYARIRGGRLRASSMVAKSRNAQLRDADIQFPSLLTMVPTVIAGTVGAGAHWVTPHNSIGLSNPAGQDPSYSTAELFKGKVQLHPRTNPDDPLYAKFGLQPPESRGSSVSGAEGLSSGDANNV.

2 disordered regions span residues 1-231 (MSRN…PSRL) and 265-294 (AVGTDEGNAENGAPRSSADMPGGNGPQWRA). Residues 1-327 (MSRNNPPPVI…LLMWLAFKDK (327 aa)) are Cytoplasmic-facing. 2 stretches are compositionally biased toward low complexity: residues 33-53 (PTPTLVIPGSPASESSHPESP) and 75-96 (SPTPSYSSALTPPSPTLTSSSS). Residues 179–189 (DGDRGEDDANK) are compositionally biased toward basic and acidic residues. Positions 190-201 (KGKKDKKGKKGK) are enriched in basic residues. The span at 202–229 (KDKEEPPSAHLDPDKDKTDPTPFREKPS) shows a compositional bias: basic and acidic residues. Residues 328-348 (VLILLSVAAVVSLALGLYQDL) form a helical membrane-spanning segment. The Vacuolar segment spans residues 349–370 (GTPPKIIYNDECPDGCEEAQVD). A helical membrane pass occupies residues 371–391 (WVEGVAIVVAIIIVVLVGSIN). Topologically, residues 392–541 (DWQKERQFKK…TPLQIKLNHL (150 aa)) are cytoplasmic. The helical transmembrane segment at 542-562 (AELIAKLGGASGLLLFIALMI) threads the bilayer. Topologically, residues 563-585 (RFFVQLKTNPDRSANDKAQSFIQ) are vacuolar. A helical membrane pass occupies residues 586–606 (ILIIAVTLVVVAVPEGLPLAV). The Ca(2+) site is built by Val595 and Glu600. At 607–1040 (TLALAFATKR…GRCVNDSVKK (434 aa)) the chain is on the cytoplasmic side. Asp642 serves as the catalytic 4-aspartylphosphate intermediate. 2 residues coordinate Mg(2+): Asp642 and Thr644. Residues Thr644, Glu737, Arg779, 909 to 911 (TGD), Arg958, and Lys964 each bind ATP. Asp983 contributes to the Mg(2+) binding site. An ATP-binding site is contributed by Asn986. A helical membrane pass occupies residues 1041–1061 (FLQFQISVNITAVFITFISAV). Position 1049 (Asn1049) interacts with Ca(2+). The Vacuolar portion of the chain corresponds to 1062 to 1068 (ASSSEES). A helical transmembrane segment spans residues 1069–1089 (VLTAVQLLWVNLIMDTFAALA). Ca(2+) contacts are provided by Asn1079 and Asp1083. The Cytoplasmic portion of the chain corresponds to 1090 to 1118 (LATDPATESSLDRKPDRKNAPLITVEMFK). The chain crosses the membrane as a helical span at residues 1119–1139 (MIMVQAIYQIIVCLVLHFAGL). The Vacuolar portion of the chain corresponds to 1140 to 1153 (KILGLEDNDQNNTE). A helical membrane pass occupies residues 1154-1171 (LGALVFNCFVFCQIFNQL). The Cytoplasmic portion of the chain corresponds to 1172-1191 (NCRRLDRKLNVLEGFWRNWY). A helical transmembrane segment spans residues 1192 to 1212 (FIIIFLIMVGGQILIVEVGGA). Ca(2+) is bound at residue Glu1208. The Vacuolar portion of the chain corresponds to 1213–1223 (AFQVTRLGGRD). The chain crosses the membrane as a helical span at residues 1224–1244 (WGITLVIGALSLPIGALVRLT). The Cytoplasmic portion of the chain corresponds to 1245-1414 (PTGPFARLLV…GLSSGDANNV (170 aa)). Residues 1376 to 1414 (PRTNPDDPLYAKFGLQPPESRGSSVSGAEGLSSGDANNV) form a disordered region.

It belongs to the cation transport ATPase (P-type) (TC 3.A.3) family.

It localises to the vacuole membrane. It carries out the reaction Ca(2+)(in) + ATP + H2O = Ca(2+)(out) + ADP + phosphate + H(+). Its function is as follows. This magnesium-dependent enzyme catalyzes the hydrolysis of ATP coupled with the transport of calcium. Transports calcium to the vacuole and participates in the control of cytosolic free calcium. This is Calcium-transporting ATPase 2 from Cryptococcus neoformans var. grubii serotype A (strain H99 / ATCC 208821 / CBS 10515 / FGSC 9487) (Filobasidiella neoformans var. grubii).